Here is a 557-residue protein sequence, read N- to C-terminus: Kelch repeat and BTB domain-containing protein 2 (557 aa).

The 70-residue stretch at 26–95 folds into the BTB domain; the sequence is CDVIITIGDG…LYNRHISSMN (70 aa). The region spanning 133–223 is the BACK domain; sequence HKLYEMVHIP…CIDIQNLDKK (91 aa). Kelch repeat units follow at residues 305-352, 353-399, and 401-464; these read EIII…VIDD, TIYA…VLDQ, and IYII…SHKD.

In terms of assembly, interacts (via BTB domain) with host CUL3.

The protein resides in the host cytoplasm. Functionally, probable substrate-specific adapter of CUL3-containing E3 ubiquitin-protein ligases which mediate the ubiquitination and subsequent proteasomal degradation of host target proteins. The polypeptide is Kelch repeat and BTB domain-containing protein 2 (KBTB2) (Bos taurus (Bovine)).